Reading from the N-terminus, the 131-residue chain is Profilin-1 (131 aa).

The protein belongs to the profilin family. In terms of assembly, occurs in many kinds of cells as a complex with monomeric actin in a 1:1 ratio. In terms of tissue distribution, expressed at low levels roots, leaves, stems, flowers and siliques. Expressed in leaf epidermal cells, trichomes and stem epidermal cells. Detected in phloem exudates (at protein level).

Its subcellular location is the cytoplasm. It is found in the cytoskeleton. Its function is as follows. Binds to actin monomers and regulates the organization of the actin cytoskeleton. At high concentrations, profilin prevents the polymerization of actin, whereas it enhances it at low concentrations. At low concentrations, associates with the poly-proline motif of formins to enhance actin filament elongation rate. Binds ACT1, ACT7 and ACT11 and inhibits actin polymerization. Coordinates the stochastic dynamic properties of actin filaments by modulating formin-mediated actin nucleation and assembly during axial cell expansion. Binds G-actin and poly-L-proline in vitro. Inhibits cell growth of various pathogenic fungal strains. May play a role as antifungal proteins in the defense system against fungal pathogen attacks. This chain is Profilin-1, found in Arabidopsis thaliana (Mouse-ear cress).